A 190-amino-acid polypeptide reads, in one-letter code: Protein GrpE (190 aa).

Polar residues predominate over residues 1–31 (MTETPNTSSEEIQTSEPSSDNELQTLQQENA). Residues 1 to 34 (MTETPNTSSEEIQTSEPSSDNELQTLQQENANLK) are disordered.

It belongs to the GrpE family. As to quaternary structure, homodimer.

Its subcellular location is the cytoplasm. Functionally, participates actively in the response to hyperosmotic and heat shock by preventing the aggregation of stress-denatured proteins, in association with DnaK and GrpE. It is the nucleotide exchange factor for DnaK and may function as a thermosensor. Unfolded proteins bind initially to DnaJ; upon interaction with the DnaJ-bound protein, DnaK hydrolyzes its bound ATP, resulting in the formation of a stable complex. GrpE releases ADP from DnaK; ATP binding to DnaK triggers the release of the substrate protein, thus completing the reaction cycle. Several rounds of ATP-dependent interactions between DnaJ, DnaK and GrpE are required for fully efficient folding. The sequence is that of Protein GrpE from Chlamydia muridarum (strain MoPn / Nigg).